A 151-amino-acid chain; its full sequence is SsrA-binding protein (151 aa).

It belongs to the SmpB family.

The protein localises to the cytoplasm. Its function is as follows. Required for rescue of stalled ribosomes mediated by trans-translation. Binds to transfer-messenger RNA (tmRNA), required for stable association of tmRNA with ribosomes. tmRNA and SmpB together mimic tRNA shape, replacing the anticodon stem-loop with SmpB. tmRNA is encoded by the ssrA gene; the 2 termini fold to resemble tRNA(Ala) and it encodes a 'tag peptide', a short internal open reading frame. During trans-translation Ala-aminoacylated tmRNA acts like a tRNA, entering the A-site of stalled ribosomes, displacing the stalled mRNA. The ribosome then switches to translate the ORF on the tmRNA; the nascent peptide is terminated with the 'tag peptide' encoded by the tmRNA and targeted for degradation. The ribosome is freed to recommence translation, which seems to be the essential function of trans-translation. This Chlamydia muridarum (strain MoPn / Nigg) protein is SsrA-binding protein.